A 99-amino-acid chain; its full sequence is NADH dehydrogenase [ubiquinone] 1 alpha subcomplex subunit 2 (99 aa).

Ala-2 is modified (N-acetylalanine). Cysteines 24 and 58 form a disulfide. An N6-acetyllysine; alternate modification is found at Lys-64. Lys-64 is subject to N6-succinyllysine; alternate. Lys-75 carries the post-translational modification N6-acetyllysine.

This sequence belongs to the complex I NDUFA2 subunit family. In terms of assembly, complex I is composed of 45 different subunits.

It localises to the mitochondrion inner membrane. In terms of biological role, accessory subunit of the mitochondrial membrane respiratory chain NADH dehydrogenase (Complex I), that is believed not to be involved in catalysis. Complex I functions in the transfer of electrons from NADH to the respiratory chain. The immediate electron acceptor for the enzyme is believed to be ubiquinone. The sequence is that of NADH dehydrogenase [ubiquinone] 1 alpha subcomplex subunit 2 (NDUFA2) from Macaca fascicularis (Crab-eating macaque).